Reading from the N-terminus, the 164-residue chain is Peptidyl-prolyl cis-trans isomerase A (164 aa).

An N-acetylmethionine modification is found at M1. At V2 the chain carries N-acetylvaline; in Peptidyl-prolyl cis-trans isomerase A, N-terminally processed. The region spanning 7-163 (FFDIAVDGEP…KKITIADCGQ (157 aa)) is the PPIase cyclophilin-type domain. Position 28 is an N6-acetyllysine; alternate (K28). Residue K28 forms a Glycyl lysine isopeptide (Lys-Gly) (interchain with G-Cter in SUMO2); alternate linkage. Residue K28 forms a Glycyl lysine isopeptide (Lys-Gly) (interchain with G-Cter in ubiquitin); alternate linkage. An N6-acetyllysine mark is found at K44 and K76. A disulfide bridge connects residues C62 and C161. S77 is modified (phosphoserine). K82 carries the post-translational modification N6-acetyllysine; alternate. K82 participates in a covalent cross-link: Glycyl lysine isopeptide (Lys-Gly) (interchain with G-Cter in SUMO2); alternate. Residue T93 is modified to Phosphothreonine. N-linked (GlcNAc...) asparagine glycosylation is present at N108. An N6-acetyllysine mark is found at K125, K131, and K133.

This sequence belongs to the cyclophilin-type PPIase family. PPIase A subfamily. In terms of assembly, interacts with protein phosphatase PPP3CA/calcineurin A. Interacts with isoform 2 of BSG/CD147. Interacts with FOXO1; the interaction promotes FOXO1 dephosphorylation, nuclear accumulation and transcriptional activity. Interacts with integrin ITGA2B:ITGB3; the interaction is ROS and peptidyl-prolyl cis-trans isomerase (PPIase) activity-dependent and is increased in the presence of thrombin. Interacts with MAP3K5. Interacts with TARDBP; the interaction is dependent on the RNA-binding activity of TARDBP and the PPIase activity of PPIA/CYPA and the acetylation of PPIA/CYPA at Lys-125 favors the interaction. Interacts with HNRNPA1, HNRNPA2B1, HNRNPC, RBMX, HNRNPK and HNRNPM. Post-translationally, acetylation at Lys-125 markedly inhibits catalysis of cis to trans isomerization. PPIA acetylation also antagonizes the immunosuppressive effects of cyclosporine by inhibiting the sequential steps of cyclosporine binding and calcineurin inhibition. Acetylation at Lys-125 favors the interaction with TARDBP.

The protein localises to the cytoplasm. The protein resides in the secreted. Its subcellular location is the nucleus. It carries out the reaction [protein]-peptidylproline (omega=180) = [protein]-peptidylproline (omega=0). Binds cyclosporin A (CsA). CsA mediates some of its effects via an inhibitory action on PPIase. In terms of biological role, catalyzes the cis-trans isomerization of proline imidic peptide bonds in oligopeptides. Exerts a strong chemotactic effect on leukocytes partly through activation of one of its membrane receptors BSG/CD147, initiating a signaling cascade that culminates in MAPK/ERK activation. Activates endothelial cells (ECs) in a proinflammatory manner by stimulating activation of NF-kappa-B and ERK, JNK and p38 MAP-kinases and by inducing expression of adhesion molecules including SELE and VCAM1. Induces apoptosis in ECs by promoting the FOXO1-dependent expression of CCL2 and BCL2L11 which are involved in EC chemotaxis and apoptosis. In response to oxidative stress, initiates proapoptotic and antiapoptotic signaling in ECs via activation of NF-kappa-B and AKT1 and up-regulation of antiapoptotic protein BCL2. Negatively regulates MAP3K5/ASK1 kinase activity, autophosphorylation and oxidative stress-induced apoptosis mediated by MAP3K5/ASK1. Necessary for the assembly of TARDBP in heterogeneous nuclear ribonucleoprotein (hnRNP) complexes and regulates TARDBP binding to RNA UG repeats and TARDBP-dependent expression of HDAC6, ATG7 and VCP which are involved in clearance of protein aggregates. Plays an important role in platelet activation and aggregation. Regulates calcium mobilization and integrin ITGA2B:ITGB3 bidirectional signaling via increased ROS production as well as by facilitating the interaction between integrin and the cell cytoskeleton. Binds heparan sulfate glycosaminoglycans. The protein is Peptidyl-prolyl cis-trans isomerase A (PPIA) of Bos taurus (Bovine).